A 204-amino-acid chain; its full sequence is Large ribosomal subunit protein eL15 (204 aa).

Belongs to the eukaryotic ribosomal protein eL15 family. Component of the large ribosomal subunit.

Its subcellular location is the cytoplasm. In terms of biological role, component of the large ribosomal subunit. The ribosome is a large ribonucleoprotein complex responsible for the synthesis of proteins in the cell. The chain is Large ribosomal subunit protein eL15 (rpl15) from Paramisgurnus dabryanus.